Reading from the N-terminus, the 220-residue chain is uncharacterized protein (220 aa).

An N-terminal signal peptide occupies residues 1 to 25 (MSCGTYKRGSLTFLLVVALAVPVFC).

As to expression, nacreous layer of shell (at protein level). Expressed primarily in the mantle with highest level in the mantle pallium and lower level in the mantle edge.

The protein resides in the secreted. This is an uncharacterized protein from Margaritifera margaritifera (Freshwater pearl mussel).